A 194-amino-acid polypeptide reads, in one-letter code: Peptidyl-tRNA hydrolase (194 aa).

Position 16 (Tyr16) interacts with tRNA. His21 serves as the catalytic Proton acceptor. Residues Phe67, Asn69, and Asn115 each contribute to the tRNA site.

This sequence belongs to the PTH family. As to quaternary structure, monomer.

It is found in the cytoplasm. It carries out the reaction an N-acyl-L-alpha-aminoacyl-tRNA + H2O = an N-acyl-L-amino acid + a tRNA + H(+). Its function is as follows. Hydrolyzes ribosome-free peptidyl-tRNAs (with 1 or more amino acids incorporated), which drop off the ribosome during protein synthesis, or as a result of ribosome stalling. In terms of biological role, catalyzes the release of premature peptidyl moieties from peptidyl-tRNA molecules trapped in stalled 50S ribosomal subunits, and thus maintains levels of free tRNAs and 50S ribosomes. The protein is Peptidyl-tRNA hydrolase of Klebsiella pneumoniae (strain 342).